We begin with the raw amino-acid sequence, 477 residues long: Phosphatidylinositol 4-kinase type 2-beta (477 aa).

Positions 1 to 80 (MPEPPRDIMA…EDRSISASLS (80 aa)) are disordered. Serine 45 bears the Phosphoserine mark. Positions 116–447 (GVFPERISQG…AQMPCVIVEC (332 aa)) constitute a PI3K/PI4K catalytic domain. The G-loop stretch occupies residues 122–128 (ISQGSSG). 2 residues coordinate ATP: serine 129 and lysine 144. Residues 149 to 151 (EPY) are important for substrate binding. The segment at 157 to 170 (KWTKYVHKVCCPCC) is important for interaction with membranes. ATP-binding positions include 253-256 (QLFV) and 267-268 (RR). Residues 260-268 (KEAEYWLRR) form an important for interaction with membranes region. The tract at residues 297–305 (RNTDRGNDN) is catalytic loop. The activation loop stretch occupies residues 338 to 358 (AIDNGLAFPFKHPDEWRAYPF). Aspartate 340 is an ATP binding site. The interval 353-362 (WRAYPFHWAW) is important for interaction with membranes.

It belongs to the PI3/PI4-kinase family. Type II PI4K subfamily.

The protein resides in the cytoplasm. The protein localises to the cytosol. Its subcellular location is the golgi apparatus membrane. It localises to the endoplasmic reticulum membrane. It is found in the cell membrane. The protein resides in the early endosome membrane. The catalysed reaction is a 1,2-diacyl-sn-glycero-3-phospho-(1D-myo-inositol) + ATP = a 1,2-diacyl-sn-glycero-3-phospho-(1D-myo-inositol 4-phosphate) + ADP + H(+). Together with PI4K2A and the type III PI4Ks (PIK4CA and PIK4CB) it contributes to the overall PI4-kinase activity of the cell. This contribution may be especially significant in plasma membrane, endosomal and Golgi compartments. The phosphorylation of phosphatidylinositol (PI) to PI4P is the first committed step in the generation of phosphatidylinositol 4,5-bisphosphate (PIP2), a precursor of the second messenger inositol 1,4,5-trisphosphate (InsP3). Contributes to the production of InsP3 in stimulated cells and is likely to be involved in the regulation of vesicular trafficking. This chain is Phosphatidylinositol 4-kinase type 2-beta (Pi4k2b), found in Rattus norvegicus (Rat).